A 322-amino-acid chain; its full sequence is tRNA-dihydrouridine(16) synthase (322 aa).

Residues 7 to 9 (PME) and Gln68 each bind FMN. The active-site Proton donor is Cys98. FMN is bound by residues Lys139, 200-202 (NGE), and 224-225 (CR).

It belongs to the Dus family. DusC subfamily. FMN is required as a cofactor.

The catalysed reaction is 5,6-dihydrouridine(16) in tRNA + NADP(+) = uridine(16) in tRNA + NADPH + H(+). It carries out the reaction 5,6-dihydrouridine(16) in tRNA + NAD(+) = uridine(16) in tRNA + NADH + H(+). Catalyzes the synthesis of 5,6-dihydrouridine (D), a modified base found in the D-loop of most tRNAs, via the reduction of the C5-C6 double bond in target uridines. Specifically modifies U16 in tRNAs. This chain is tRNA-dihydrouridine(16) synthase, found in Vibrio parahaemolyticus serotype O3:K6 (strain RIMD 2210633).